The following is a 460-amino-acid chain: Arginine biosynthesis bifunctional protein ArgJ, chloroplastic (460 aa).

A chloroplast-targeting transit peptide spans 1–26 (MYLSVPHYPSLKFTAFQSHKRNFRVF). Residues threonine 202, lysine 228, threonine 239, glutamate 328, asparagine 455, and threonine 460 each coordinate substrate. Threonine 239 serves as the catalytic Nucleophile.

The protein belongs to the ArgJ family. Heterodimer of an alpha and a beta chain.

Its subcellular location is the plastid. It is found in the chloroplast. It catalyses the reaction N(2)-acetyl-L-ornithine + L-glutamate = N-acetyl-L-glutamate + L-ornithine. The enzyme catalyses L-glutamate + acetyl-CoA = N-acetyl-L-glutamate + CoA + H(+). It functions in the pathway amino-acid biosynthesis; L-arginine biosynthesis; L-ornithine and N-acetyl-L-glutamate from L-glutamate and N(2)-acetyl-L-ornithine (cyclic): step 1/1. The protein operates within amino-acid biosynthesis; L-arginine biosynthesis; N(2)-acetyl-L-ornithine from L-glutamate: step 1/4. Catalyzes two activities which are involved in the cyclic version of arginine biosynthesis: the synthesis of acetylglutamate from glutamate and acetyl-CoA, and of ornithine by transacetylation between acetylornithine and glutamate. This Citrullus lanatus (Watermelon) protein is Arginine biosynthesis bifunctional protein ArgJ, chloroplastic.